A 479-amino-acid chain; its full sequence is Poly(A) polymerase catalytic subunit (479 aa).

Catalysis depends on residues Asp202 and Asp204. Asp202, Asp204, and Asp253 together coordinate Ca(2+).

This sequence belongs to the poxviridae poly(A) polymerase catalytic subunit family. Heterodimer of a large (catalytic) subunit and a small (regulatory) subunit.

The catalysed reaction is RNA(n) + ATP = RNA(n)-3'-adenine ribonucleotide + diphosphate. Its function is as follows. Polymerase that creates the 3'-poly(A) tail of mRNA's. In Bos taurus (Bovine), this protein is Poly(A) polymerase catalytic subunit (OPG063).